The sequence spans 306 residues: MTTIRQRIDTQHRDAIHDAQLNIYGNRLATCGSDRLVKIFEVRPNGQSYPLIELSGHNGPVWKVSWAHPKYGGLLASASYDKKVIIWQEVNGRWQKTYEWETHEASVTSVAFAPHQFGLMLASSSADGTIGILRFDAQTQQWQSSRIQNCHDQGVNSVSWAPGTADPAGKKRFVSAGNDKLVKIWLLNEELNEWTCEKAIHCHKDFVREAAWCPVTNKGQHSIVSCGLDGNLVLYRIADIETAEWKSKLLEQAPCALYHASFSPCGSFLSVSGDDNMITLWRENLQGQWIKIPRENKEREGMGQQR.

WD repeat units lie at residues 11 to 50, 56 to 97, 102 to 143, 150 to 195, 202 to 245, and 252 to 291; these read QHRD…QSYP, GHNG…WQKT, THEA…QQWQ, CHDQ…NEWT, CHKD…TAEW, and QAPC…QWIK.

It belongs to the WD repeat SEC13 family. Probably part of the GATOR complex.

It localises to the cytoplasmic vesicle. The protein resides in the COPII-coated vesicle membrane. It is found in the endoplasmic reticulum membrane. The protein localises to the nucleus. Its subcellular location is the nuclear pore complex. It localises to the lysosome membrane. Functionally, functions as a component of the nuclear pore complex (NPC) and the COPII coat. Its function is as follows. As a component of the GATOR complex may function in the amino acid-sensing branch of the TORC1 signaling pathway. This is Protein SEC13 homolog from Caenorhabditis briggsae.